The following is a 529-amino-acid chain: 2-(3-amino-3-carboxypropyl)histidine synthase subunit 2-2 (529 aa).

3 residues coordinate [4Fe-4S] cluster: Cys130, Cys151, and Cys366.

It belongs to the DPH1/DPH2 family. DPH2 subfamily. As to quaternary structure, component of the 2-(3-amino-3-carboxypropyl)histidine synthase complex composed of DPH1, DPH2, DPH3 and a NADH-dependent reductase, predominantly CBR1. [4Fe-4S] cluster is required as a cofactor.

The protein localises to the cytoplasm. The protein operates within protein modification; peptidyl-diphthamide biosynthesis. Its function is as follows. Required for the first step of diphthamide biosynthesis, a post-translational modification of histidine which occurs in elongation factor 2. DPH1 and DPH2 transfer a 3-amino-3-carboxypropyl (ACP) group from S-adenosyl-L-methionine (SAM) to a histidine residue, the reaction is assisted by a reduction system comprising DPH3 and a NADH-dependent reductase, predominantly CBR1. Facilitates the reduction of the catalytic iron-sulfur cluster found in the DPH1 subunit. This chain is 2-(3-amino-3-carboxypropyl)histidine synthase subunit 2-2, found in Candida albicans (strain SC5314 / ATCC MYA-2876) (Yeast).